Consider the following 303-residue polypeptide: Nucleotide-binding protein Dvul_1502 (303 aa).

23–30 (GLSGAGKS) is an ATP binding site. 75–78 (DLRE) is a binding site for GTP.

The protein belongs to the RapZ-like family.

In terms of biological role, displays ATPase and GTPase activities. The protein is Nucleotide-binding protein Dvul_1502 of Nitratidesulfovibrio vulgaris (strain DP4) (Desulfovibrio vulgaris).